Consider the following 620-residue polypeptide: LysM domain receptor-like kinase 3 (620 aa).

The N-terminal stretch at 1–23 (MNLKNGLLLFILFLDCVFFKVES) is a signal peptide. Topologically, residues 24 to 231 (KCVKGCDVAL…YSRTGIAKGS (208 aa)) are extracellular. Intrachain disulfides connect Cys25/Cys92, Cys29/Cys154, and Cys90/Cys152. Residue Asn46 is glycosylated (N-linked (GlcNAc...) asparagine). Residues 46–72 (NISNFMQSKIVLTNSFDVIMSYNRDVV) enclose the LysM 1; degenerate domain. LysM domains follow at residues 102-148 (FEYT…KINV) and 167-210 (VTYP…VFIP). Chitin is bound by residues 108–114 (EGDDYDL) and 136–142 (DPNHIPV). Residues Asn147 and Asn199 are each glycosylated (N-linked (GlcNAc...) asparagine). A helical membrane pass occupies residues 232–252 (AVGIAMAGIFGLLLFVIYIYA). Residues 253–620 (KYFQKKEEEK…QSLINLLSTR (368 aa)) lie on the Cytoplasmic side of the membrane. A compositionally biased stretch (polar residues) spans 265-278 (LPQTSRAFSTQDAS). The tract at residues 265 to 292 (LPQTSRAFSTQDASGSAEYETSGSSGHA) is disordered. Phosphoserine is present on residues Ser269 and Ser273. One can recognise a Protein kinase domain in the interval 322–595 (FSLDNKIGQG…RSIVVALMTL (274 aa)). Residues 328-336 (IGQGGFGAV) and Lys349 each bind ATP. The Proton acceptor role is filled by Asp441.

The protein belongs to the protein kinase superfamily. Ser/Thr protein kinase family. Forms homodimers and homooligomers. Forms heteromeric complexes with NFP at the cell periphery in nodules. Interacts with PUB1. Autophosphorylated. As to expression, expressed in the epidermal and root hair cells of the developing root hair zone during nonsymbiotic growth. Accumulates in roots and nodules during symbiotic growth with rhizobia. Localized at the cell periphery in a narrow zone of about two cell layers (e.g. L1/L2 zone) at the nodule apex upon infection by rhizobia, from the meristem to the infection zone (at protein level).

It localises to the cell membrane. It is found in the vacuole lumen. It catalyses the reaction L-seryl-[protein] + ATP = O-phospho-L-seryl-[protein] + ADP + H(+). The enzyme catalyses L-threonyl-[protein] + ATP = O-phospho-L-threonyl-[protein] + ADP + H(+). Putative receptor for S.meliloti Nod factor signals essential for the establishment of the nitrogen-fixing, root nodule symbiosis with S.meliloti. Involved in the control of root hair curling after S.meliloti infection, probably by modulating the reorganization of the microtubular cytoskeleton in epidermal and cortical cells. Regulates a subset of Nod factor-induced genes. This is LysM domain receptor-like kinase 3 from Medicago truncatula (Barrel medic).